A 211-amino-acid polypeptide reads, in one-letter code: Large ribosomal subunit protein uL4 (211 aa).

Residues Ala-42–Gly-87 are disordered. Over residues Gly-60 to Gly-71 the composition is skewed to basic residues.

It belongs to the universal ribosomal protein uL4 family. As to quaternary structure, part of the 50S ribosomal subunit.

Its function is as follows. One of the primary rRNA binding proteins, this protein initially binds near the 5'-end of the 23S rRNA. It is important during the early stages of 50S assembly. It makes multiple contacts with different domains of the 23S rRNA in the assembled 50S subunit and ribosome. Functionally, forms part of the polypeptide exit tunnel. This is Large ribosomal subunit protein uL4 from Synechococcus sp. (strain CC9902).